The sequence spans 291 residues: Nucleotide-binding protein Lm4b_02443 (291 aa).

13–20 is a binding site for ATP; the sequence is GMSGAGKT. 63 to 66 contributes to the GTP binding site; sequence DLRG.

It belongs to the RapZ-like family.

Its function is as follows. Displays ATPase and GTPase activities. The polypeptide is Nucleotide-binding protein Lm4b_02443 (Listeria monocytogenes serotype 4b (strain CLIP80459)).